Here is a 233-residue protein sequence, read N- to C-terminus: Phosphoribosylformylglycinamidine synthase subunit PurQ (233 aa).

The Glutamine amidotransferase type-1 domain occupies 3-233 (SAVLVFPGIN…GLAQHLAKAA (231 aa)). The Nucleophile role is filled by Cys87. Catalysis depends on residues His204 and Glu206.

In terms of assembly, part of the FGAM synthase complex composed of 1 PurL, 1 PurQ and 2 PurS subunits.

The protein resides in the cytoplasm. It carries out the reaction N(2)-formyl-N(1)-(5-phospho-beta-D-ribosyl)glycinamide + L-glutamine + ATP + H2O = 2-formamido-N(1)-(5-O-phospho-beta-D-ribosyl)acetamidine + L-glutamate + ADP + phosphate + H(+). The catalysed reaction is L-glutamine + H2O = L-glutamate + NH4(+). Its pathway is purine metabolism; IMP biosynthesis via de novo pathway; 5-amino-1-(5-phospho-D-ribosyl)imidazole from N(2)-formyl-N(1)-(5-phospho-D-ribosyl)glycinamide: step 1/2. Part of the phosphoribosylformylglycinamidine synthase complex involved in the purines biosynthetic pathway. Catalyzes the ATP-dependent conversion of formylglycinamide ribonucleotide (FGAR) and glutamine to yield formylglycinamidine ribonucleotide (FGAM) and glutamate. The FGAM synthase complex is composed of three subunits. PurQ produces an ammonia molecule by converting glutamine to glutamate. PurL transfers the ammonia molecule to FGAR to form FGAM in an ATP-dependent manner. PurS interacts with PurQ and PurL and is thought to assist in the transfer of the ammonia molecule from PurQ to PurL. The chain is Phosphoribosylformylglycinamidine synthase subunit PurQ from Rhodopseudomonas palustris (strain ATCC BAA-98 / CGA009).